The chain runs to 473 residues: Isocitrate dehydrogenase [NADP] (473 aa).

Thr104 lines the NADP(+) pocket. D-threo-isocitrate is bound by residues Ser113, Asn115, Arg119, Arg129, and Arg153. Asp362 lines the Mg(2+) pocket. Residues 394–400 (HGTAPKH), Asn407, Tyr446, and Arg450 each bind NADP(+).

This sequence belongs to the isocitrate and isopropylmalate dehydrogenases family. As to quaternary structure, homodimer. Mg(2+) serves as cofactor. Requires Mn(2+) as cofactor.

The enzyme catalyses D-threo-isocitrate + NADP(+) = 2-oxoglutarate + CO2 + NADPH. Inhibited by either oxaloacetate or glyoxylate. Also inhibited by the adenine nucleotides AMP, ADP and ATP and by NADPH, which inhibits the activity by 28% when it is added to the assay mixture at 0.25 mM. Catalyzes the oxidative decarboxylation of isocitrate to 2-oxoglutarate and carbon dioxide with the concomitant reduction of NADP(+). The polypeptide is Isocitrate dehydrogenase [NADP] (Nostoc sp. (strain PCC 7120 / SAG 25.82 / UTEX 2576)).